Consider the following 391-residue polypeptide: Argininosuccinate synthase (391 aa).

6–14 is an ATP binding site; sequence AYSGGLDTT. Y84 is a binding site for L-citrulline. G114 serves as a coordination point for ATP. L-aspartate contacts are provided by T116, N120, and D121. N120 is an L-citrulline binding site. Residues R124, S171, S180, E253, and Y265 each contribute to the L-citrulline site.

The protein belongs to the argininosuccinate synthase family. Type 1 subfamily. Homotetramer.

It localises to the cytoplasm. The enzyme catalyses L-citrulline + L-aspartate + ATP = 2-(N(omega)-L-arginino)succinate + AMP + diphosphate + H(+). It functions in the pathway amino-acid biosynthesis; L-arginine biosynthesis; L-arginine from L-ornithine and carbamoyl phosphate: step 2/3. The polypeptide is Argininosuccinate synthase (Metallosphaera sedula (strain ATCC 51363 / DSM 5348 / JCM 9185 / NBRC 15509 / TH2)).